Consider the following 74-residue polypeptide: U5-theraphotoxin-Cg1a (74 aa).

The N-terminal stretch at 1–19 is a signal peptide; sequence MNATIFALLLLLNLAMYNA. Residues 20–39 constitute a propeptide that is removed on maturation; the sequence is AEQSSETDMDDTLLIPENYR. 3 disulfide bridges follow: cysteine 42–cysteine 56, cysteine 49–cysteine 61, and cysteine 55–cysteine 71.

It belongs to the neurotoxin 36 family. 01 subfamily. In terms of tissue distribution, expressed by the venom gland.

The protein resides in the secreted. In terms of biological role, probable ion channel inhibitor. This chain is U5-theraphotoxin-Cg1a, found in Chilobrachys guangxiensis (Chinese earth tiger tarantula).